The sequence spans 82 residues: uncharacterized protein (82 aa).

The protein resides in the plastid. Its subcellular location is the chloroplast. This is an uncharacterized protein from Vicia faba (Broad bean).